A 629-amino-acid polypeptide reads, in one-letter code: Putative polypeptide N-acetylgalactosaminyltransferase 10 (629 aa).

Residues 1 to 12 are Cytoplasmic-facing; that stretch reads MGLSRYLSRRHH. A helical; Signal-anchor for type II membrane protein transmembrane segment spans residues 13–33; the sequence is WVIQYCALLLFLYFIYSYVAV. Topologically, residues 34–629 are lumenal; it reads SNDAPRLNEE…RQANEHKELE (596 aa). 2 N-linked (GlcNAc...) asparagine glycosylation sites follow: N143 and N177. 5 cysteine pairs are disulfide-bonded: C154–C385, C376–C454, C493–C510, C539–C556, and C582–C598. Residues 163–275 form a catalytic subdomain A region; the sequence is LPTVSVIFPF…YNWLPPLLDP (113 aa). D204 and R236 together coordinate substrate. Residues D259 and H261 each coordinate Mn(2+). A catalytic subdomain B region spans residues 331–393; the sequence is PFDSPVMAGG…PCSRVAHIYR (63 aa). A substrate-binding site is contributed by W362. H390 is a Mn(2+) binding site. R393 is a binding site for substrate. The segment at 393–406 is flexible loop; the sequence is RCKYAPFKNAGMGD. Residues 526-629 enclose the Ricin B-type lectin domain; sequence TRWHDIRPKG…RQANEHKELE (104 aa).

It belongs to the glycosyltransferase 2 family. GalNAc-T subfamily. Mn(2+) serves as cofactor.

It localises to the golgi apparatus membrane. The catalysed reaction is L-seryl-[protein] + UDP-N-acetyl-alpha-D-galactosamine = a 3-O-[N-acetyl-alpha-D-galactosaminyl]-L-seryl-[protein] + UDP + H(+). It catalyses the reaction L-threonyl-[protein] + UDP-N-acetyl-alpha-D-galactosamine = a 3-O-[N-acetyl-alpha-D-galactosaminyl]-L-threonyl-[protein] + UDP + H(+). It functions in the pathway protein modification; protein glycosylation. Functionally, may catalyze the initial reaction in O-linked oligosaccharide biosynthesis, the transfer of an N-acetyl-D-galactosamine residue to a serine or threonine residue on the protein receptor. The sequence is that of Putative polypeptide N-acetylgalactosaminyltransferase 10 from Caenorhabditis briggsae.